The primary structure comprises 288 residues: MAMTSTMQLLVLSFLVIASLFLGATVAPPASLISTPDQALKDKADLIVAKDGSGNFTTVNEAVAAAPENGVKPFVIYIKEGLYKEVIRIGKKKTNLTLVGDGRDLTVLSGDLNGVDGIKTFDSATLAVDESGFMAQDLCIRNTAGPEKRQAVALRISTDMTIIYRCRIDAYQDTLYAYSGRQFYRDCYITGTVDFIFGRAAAVFQYCQIEARKPGIGQTNILTAQSREEDTATSGFSFQKCNISASSDLTPIKGTVKTFLGRPWRAFSRVVFMESFIDDVIDRAGWTP.

A signal peptide spans 1 to 27 (MAMTSTMQLLVLSFLVIASLFLGATVA). N-linked (GlcNAc...) asparagine glycans are attached at residues Asn55 and Asn95. 2 residues coordinate substrate: Thr120 and Gln150. The Proton donor role is filled by Asp173. Asp194 functions as the Nucleophile in the catalytic mechanism. N-linked (GlcNAc...) asparagine glycosylation occurs at Asn242. 2 residues coordinate substrate: Arg262 and Trp264.

Belongs to the pectinesterase family.

It localises to the secreted. It is found in the cell wall. It carries out the reaction [(1-&gt;4)-alpha-D-galacturonosyl methyl ester](n) + n H2O = [(1-&gt;4)-alpha-D-galacturonosyl](n) + n methanol + n H(+). It functions in the pathway glycan metabolism; pectin degradation; 2-dehydro-3-deoxy-D-gluconate from pectin: step 1/5. Functionally, acts in the modification of cell walls via demethylesterification of cell wall pectin. The sequence is that of Probable pectinesterase 56 (PME56) from Arabidopsis thaliana (Mouse-ear cress).